Here is a 121-residue protein sequence, read N- to C-terminus: Cell division protein FtsL (121 aa).

Over 1-34 (MISRVTEALSKVKGSMGSHERHALPGVIGDDLLR) the chain is Cytoplasmic. The helical transmembrane segment at 35-57 (FGKLPLCLFICIILTAVTVVTTA) threads the bilayer. Topologically, residues 58–121 (HHTRLLTAQR…PSQENIVVQK (64 aa)) are periplasmic.

This sequence belongs to the FtsL family. In terms of assembly, part of a complex composed of FtsB, FtsL and FtsQ.

It is found in the cell inner membrane. In terms of biological role, essential cell division protein. May link together the upstream cell division proteins, which are predominantly cytoplasmic, with the downstream cell division proteins, which are predominantly periplasmic. The sequence is that of Cell division protein FtsL from Shigella dysenteriae serotype 1 (strain Sd197).